The chain runs to 105 residues: UPF0145 protein AHA_2580 (105 aa).

It belongs to the UPF0145 family.

The sequence is that of UPF0145 protein AHA_2580 from Aeromonas hydrophila subsp. hydrophila (strain ATCC 7966 / DSM 30187 / BCRC 13018 / CCUG 14551 / JCM 1027 / KCTC 2358 / NCIMB 9240 / NCTC 8049).